A 396-amino-acid chain; its full sequence is NADH-quinone oxidoreductase subunit D (396 aa).

The protein belongs to the complex I 49 kDa subunit family. In terms of assembly, NDH-1 is composed of 14 different subunits. Subunits NuoB, C, D, E, F, and G constitute the peripheral sector of the complex.

The protein resides in the cell inner membrane. The enzyme catalyses a quinone + NADH + 5 H(+)(in) = a quinol + NAD(+) + 4 H(+)(out). Its function is as follows. NDH-1 shuttles electrons from NADH, via FMN and iron-sulfur (Fe-S) centers, to quinones in the respiratory chain. The immediate electron acceptor for the enzyme in this species is believed to be ubiquinone. Couples the redox reaction to proton translocation (for every two electrons transferred, four hydrogen ions are translocated across the cytoplasmic membrane), and thus conserves the redox energy in a proton gradient. The sequence is that of NADH-quinone oxidoreductase subunit D from Methylobacterium sp. (strain 4-46).